We begin with the raw amino-acid sequence, 138 residues long: Basic phospholipase A2 ammodytoxin C (138 aa).

Positions 1-16 (MRTLWIVAVCLIGVEG) are cleaved as a signal peptide. 7 cysteine pairs are disulfide-bonded: C42-C131, C44-C60, C59-C111, C65-C138, C66-C104, C73-C97, and C91-C102. Residues Y43, G45, and G47 each coordinate Ca(2+). The active site involves H63. D64 lines the Ca(2+) pocket. D105 is a catalytic residue.

It belongs to the phospholipase A2 family. Group II subfamily. D49 sub-subfamily. As to quaternary structure, monomer. Binds to calmodulin, coagulation factor X (F10), 14-3-3 proteins gamma (YWHAG) and epsilon (YWHAE), and R25, a mitochondrial membrane protein. May bind to M-type PLA2 receptor (R-180). Ca(2+) is required as a cofactor. Expressed by the venom gland.

The protein resides in the secreted. It is found in the host cytoplasm. The protein localises to the host cytosol. It catalyses the reaction a 1,2-diacyl-sn-glycero-3-phosphocholine + H2O = a 1-acyl-sn-glycero-3-phosphocholine + a fatty acid + H(+). Functionally, snake venom phospholipase A2 (PLA2) that acts as a presynaptic neurotoxin, an inhibitor of blood coagulation, and has been found to bind with high affinity to intracellular proteins. The response of indirectly stimulated neuromuscular preparations to ammodytoxin (Atx) is triphasic. The first phase, the transient inhibition of the acetylcholine (ACh) release, starts soon after the addition of Atx and lasts for several minutes. This phase is probably independent of Atx enzymatic activity. The effect may be due to the specific binding of the toxin to presynaptic receptors. These receptors, called N-type receptors, are still unidentified. It is noteworthy that a neuronal isoform of the M-type PLA2 receptor (R180) has been identified as a high-affinity receptor for Atx in neuronal plasma membranes. It was demonstrated however that this receptor is not essential for expression of neurotoxicity by Atx. The second phase corresponds to an augmentation of neurotransmitter release. A peak is reached 10-20 minutes after exposure of the preparation to Atx and is followed by a gradual reduction. In this phase, the enzymatic activity of Atx of the mammalian is not significant. It is speculated that the increased release of neurotransmitter in this phase is induced by the interference of Atx with voltage-gated potassium channels. Measurements of ionic showed however that voltage-gated potassium channels are not affected by Atx. The third phase of the response of neuromuscular preparations to Atx, which corresponds to a complete and irreversible paralysis, is clearly dependent on the hydrolytic activity of the toxin. In addition to its presynaptic neurotoxicity, Atx shows an anticoagulant activity by binding with high affinity to activated coagulation factor X (F10) thus inhibiting the formation of the prothrombinase complex (FX/FV) and its activity (IC(50) is 240 nM). Surprisingly, Atx was discovered to bind intracellular proteins such as calmodulin (CaM), 14-3-3 proteins gamma (YWHAG) and epsilon (YWHAE), as well as R25, a mitochondrial integral membrane protein found in cerebral cortex. These findings raised a doubt about the dogma of the exclusively extracellular action of PLA2s, defended by the potential instability of these molecules in the reducing environment of the eukaryotic cytosol coupled with their possible inability to act as enzymes in this cellular compartment, due to too low concentration of calcium ions. This hypothesis was challenged efficiently by demonstrating the internalization of AtxA into a culture cells, but still remains to be directly demonstrated in vivo. PLA2 catalyzes the calcium-dependent hydrolysis of the 2-acyl groups in 3-sn-phosphoglycerides. The chain is Basic phospholipase A2 ammodytoxin C from Vipera ammodytes ammodytes (Western sand viper).